The following is a 520-amino-acid chain: 3-phosphoshikimate 1-carboxyvinyltransferase, chloroplastic (520 aa).

A chloroplast-targeting transit peptide spans 1–76; it reads MAQISSMAQG…RISASVATAE (76 aa). Residues K99, S100, and R104 each coordinate 3-phosphoshikimate. K99 provides a ligand contact to phosphoenolpyruvate. 2 residues coordinate phosphoenolpyruvate: G177 and R207. 3-phosphoshikimate-binding residues include S254, S255, Q256, S282, D407, and K434. Q256 contacts phosphoenolpyruvate. Residue D407 is the Proton acceptor of the active site. Positions 438, 480, and 505 each coordinate phosphoenolpyruvate.

Belongs to the EPSP synthase family.

It localises to the plastid. The protein resides in the chloroplast. It carries out the reaction 3-phosphoshikimate + phosphoenolpyruvate = 5-O-(1-carboxyvinyl)-3-phosphoshikimate + phosphate. Its pathway is metabolic intermediate biosynthesis; chorismate biosynthesis; chorismate from D-erythrose 4-phosphate and phosphoenolpyruvate: step 6/7. Catalyzes the transfer of the enolpyruvyl moiety of phosphoenolpyruvate (PEP) to the 5-hydroxyl of shikimate-3-phosphate (S3P) to produce enolpyruvyl shikimate-3-phosphate and inorganic phosphate. The polypeptide is 3-phosphoshikimate 1-carboxyvinyltransferase, chloroplastic (Solanum lycopersicum (Tomato)).